The primary structure comprises 248 residues: 14-3-3-like protein 1 (248 aa).

This sequence belongs to the 14-3-3 family. Interacts with daf-16 and sir-2.1. Interacts with atgl-1. Interacts with hcf-1.

It is found in the cytoplasm. It localises to the nucleus. In terms of biological role, required to modulate lifespan, in concert with hcf-1, acting redundantly with 14-3-3-like protein ftt-2. The chain is 14-3-3-like protein 1 (par-5) from Caenorhabditis elegans.